Consider the following 417-residue polypeptide: Phosphoglycerate kinase 2 (417 aa).

The residue at position 2 (S2) is an N-acetylserine. Phosphoserine occurs at positions 2 and 4. K11 carries the post-translational modification N6-acetyllysine. Residues V23, D24, F25, N26, Q38, and R39 each coordinate (2R)-3-phosphoglycerate. An N6-acetyllysine modification is found at K48. 4 residues coordinate (2R)-3-phosphoglycerate: S62, H63, G65, and R66. K75, K86, and K97 each carry N6-acetyllysine. Residues L122 and R123 each contribute to the (2R)-3-phosphoglycerate site. An N6-acetyllysine mark is found at K131 and K146. (2R)-3-phosphoglycerate is bound by residues H170 and R171. The residue at position 196 (Y196) is a Phosphotyrosine. N6-acetyllysine is present on K199. G214 lines the ADP pocket. G214 lines the CDP pocket. 2 residues coordinate AMP: A215 and K216. A215 lines the ATP pocket. Residue A215 coordinates Mg(2+). Mg(2+)-binding residues include A218 and D219. Position 219 (D219) interacts with CDP. K220 serves as a coordination point for AMP. K220 serves as a coordination point for ATP. ADP is bound at residue G238. CDP is bound at residue G238. G239 serves as a coordination point for AMP. Position 239 (G239) interacts with ATP. Residues K267 and K291 each carry the N6-acetyllysine modification. AMP is bound at residue G313. G313 is a binding site for ATP. CDP contacts are provided by G338 and F343. Residue F343 coordinates ADP. An AMP-binding site is contributed by E344. ATP is bound by residues E344, D375, and T376. Residue D375 participates in Mg(2+) binding.

Belongs to the phosphoglycerate kinase family. Monomer. Mg(2+) is required as a cofactor.

It localises to the cytoplasm. It catalyses the reaction (2R)-3-phosphoglycerate + ATP = (2R)-3-phospho-glyceroyl phosphate + ADP. Its pathway is carbohydrate degradation; glycolysis; pyruvate from D-glyceraldehyde 3-phosphate: step 2/5. Functionally, essential for sperm motility and male fertility but is not required for the completion of spermatogenesis. This chain is Phosphoglycerate kinase 2 (PGK2), found in Macaca fascicularis (Crab-eating macaque).